Consider the following 102-residue polypeptide: Small ribosomal subunit protein uS10 (102 aa).

The protein belongs to the universal ribosomal protein uS10 family. In terms of assembly, part of the 30S ribosomal subunit.

Functionally, involved in the binding of tRNA to the ribosomes. This chain is Small ribosomal subunit protein uS10, found in Thermosipho africanus (strain TCF52B).